We begin with the raw amino-acid sequence, 302 residues long: 4-hydroxy-tetrahydrodipicolinate synthase (302 aa).

Thr-46 is a binding site for pyruvate. Tyr-134 serves as the catalytic Proton donor/acceptor. Residue Lys-162 is the Schiff-base intermediate with substrate of the active site. Residue Val-204 coordinates pyruvate.

The protein belongs to the DapA family. In terms of assembly, homotetramer; dimer of dimers.

The protein resides in the cytoplasm. It carries out the reaction L-aspartate 4-semialdehyde + pyruvate = (2S,4S)-4-hydroxy-2,3,4,5-tetrahydrodipicolinate + H2O + H(+). It participates in amino-acid biosynthesis; L-lysine biosynthesis via DAP pathway; (S)-tetrahydrodipicolinate from L-aspartate: step 3/4. Catalyzes the condensation of (S)-aspartate-beta-semialdehyde [(S)-ASA] and pyruvate to 4-hydroxy-tetrahydrodipicolinate (HTPA). The polypeptide is 4-hydroxy-tetrahydrodipicolinate synthase (Xylella fastidiosa (strain Temecula1 / ATCC 700964)).